The chain runs to 299 residues: Oxygen-dependent coproporphyrinogen-III oxidase (299 aa).

Ser-92 provides a ligand contact to substrate. His-96 and His-106 together coordinate a divalent metal cation. His-106 serves as the catalytic Proton donor. 108–110 (NVR) contacts substrate. Residues His-145 and His-175 each coordinate a divalent metal cation. An important for dimerization region spans residues 240 to 275 (YVEFNLVWDRGTLFGLQTGGRTESILMSMPPLVRWE). Position 258–260 (258–260 (GGR)) interacts with substrate.

The protein belongs to the aerobic coproporphyrinogen-III oxidase family. As to quaternary structure, homodimer. A divalent metal cation is required as a cofactor.

It localises to the cytoplasm. The enzyme catalyses coproporphyrinogen III + O2 + 2 H(+) = protoporphyrinogen IX + 2 CO2 + 2 H2O. It participates in porphyrin-containing compound metabolism; protoporphyrin-IX biosynthesis; protoporphyrinogen-IX from coproporphyrinogen-III (O2 route): step 1/1. Functionally, involved in the heme biosynthesis. Catalyzes the aerobic oxidative decarboxylation of propionate groups of rings A and B of coproporphyrinogen-III to yield the vinyl groups in protoporphyrinogen-IX. This is Oxygen-dependent coproporphyrinogen-III oxidase from Salmonella arizonae (strain ATCC BAA-731 / CDC346-86 / RSK2980).